A 335-amino-acid polypeptide reads, in one-letter code: Probable phosphoglycerate mutase ARB_03491 (335 aa).

A signal peptide spans 1–24 (MAGRILLGLTLLATSLPLLAMGDA). Histidine 108 acts as the Tele-phosphohistidine intermediate in catalysis. Glutamate 211 acts as the Proton donor/acceptor in catalysis.

This sequence belongs to the phosphoglycerate mutase family.

It localises to the secreted. In terms of biological role, probable phosphomutase that may have a function related to the manipulation of phosphate groups on carbohydrates. This Arthroderma benhamiae (strain ATCC MYA-4681 / CBS 112371) (Trichophyton mentagrophytes) protein is Probable phosphoglycerate mutase ARB_03491.